The sequence spans 268 residues: MATYAIGDLQGCHRHFLELLDLIGFNATRDRLWLVGDIVNRGPDSLSLLRTLIELGDAVTMVLGNHDLHLLAVAAGSIRQQHGDTLQPVLEASDSSRLLDWLRHQQLFHHEDEYVLVHAGLLPNWSIEQAQILAQEVETIIRGDRFQTFSRSMYGNVPDHWHDRLQGEDRWRVIINAMTRMRVCSPEGRMNFSCKGELSSVPDGLLPWFEIPWRASKDTTIVFGHWSALGLHLTPNLIALDTGCVWQGCLTSVRLEDRKVFQVPCVRH.

Belongs to the Ap4A hydrolase family.

It carries out the reaction P(1),P(4)-bis(5'-adenosyl) tetraphosphate + H2O = 2 ADP + 2 H(+). Functionally, hydrolyzes diadenosine 5',5'''-P1,P4-tetraphosphate to yield ADP. This is Bis(5'-nucleosyl)-tetraphosphatase, symmetrical from Nitrosomonas europaea (strain ATCC 19718 / CIP 103999 / KCTC 2705 / NBRC 14298).